Consider the following 96-residue polypeptide: Large ribosomal subunit protein bL21 (96 aa).

The protein belongs to the bacterial ribosomal protein bL21 family. As to quaternary structure, part of the 50S ribosomal subunit. Contacts protein L20.

This protein binds to 23S rRNA in the presence of protein L20. The protein is Large ribosomal subunit protein bL21 of Chlorobium chlorochromatii (strain CaD3).